Here is a 443-residue protein sequence, read N- to C-terminus: MSKLNMTPREIVAYLDEYIIGQKEAKKSIAIAFRNRYRRLQLEKSLQEEITPKNILMIGSTGVGKTEIARRIAKIMELPFVKVEASKYTEVGFVGRDVESMVRDLVNNSVLLVENEHKEKLKDKIEEAVIEKIAKKLLPPLPNGVSEEKKQEYANSLLKMQQRIAQGELDSREIEIEVRKKSIEIDSNVPPEILRVQENLIKVFHKEQDKVKKTLSVKEAKEALKAEISDTLLDSEAIKMEGLKRAESSGVIFIDEIDKIAVSSKEGSRQDPSKEGVQRDLLPIVEGSVVNTKYGSIKTEHILFIAAGAFHLSKPSDLIPELQGRFPLRVELENLTEEIMYMILTQTKTSIIKQYQALLKVEGVEIAFEDDAIKELAKLSYNANQKSEDIGARRLHTTIEKVLEDISFEAEDYSGQNVTITKELVQSKLEDLVADENLVKYIL.

ATP-binding positions include I20, 62 to 67 (GVGKTE), D255, E321, and R393.

Belongs to the ClpX chaperone family. HslU subfamily. In terms of assembly, a double ring-shaped homohexamer of HslV is capped on each side by a ring-shaped HslU homohexamer. The assembly of the HslU/HslV complex is dependent on binding of ATP.

The protein localises to the cytoplasm. Its function is as follows. ATPase subunit of a proteasome-like degradation complex; this subunit has chaperone activity. The binding of ATP and its subsequent hydrolysis by HslU are essential for unfolding of protein substrates subsequently hydrolyzed by HslV. HslU recognizes the N-terminal part of its protein substrates and unfolds these before they are guided to HslV for hydrolysis. The protein is ATP-dependent protease ATPase subunit HslU of Helicobacter pylori (strain ATCC 700392 / 26695) (Campylobacter pylori).